The following is a 149-amino-acid chain: D-aminoacyl-tRNA deacylase (149 aa).

The Gly-cisPro motif, important for rejection of L-amino acids motif lies at G137–P138.

This sequence belongs to the DTD family. Homodimer.

It localises to the cytoplasm. It catalyses the reaction glycyl-tRNA(Ala) + H2O = tRNA(Ala) + glycine + H(+). The catalysed reaction is a D-aminoacyl-tRNA + H2O = a tRNA + a D-alpha-amino acid + H(+). In terms of biological role, an aminoacyl-tRNA editing enzyme that deacylates mischarged D-aminoacyl-tRNAs. Also deacylates mischarged glycyl-tRNA(Ala), protecting cells against glycine mischarging by AlaRS. Acts via tRNA-based rather than protein-based catalysis; rejects L-amino acids rather than detecting D-amino acids in the active site. By recycling D-aminoacyl-tRNA to D-amino acids and free tRNA molecules, this enzyme counteracts the toxicity associated with the formation of D-aminoacyl-tRNA entities in vivo and helps enforce protein L-homochirality. The chain is D-aminoacyl-tRNA deacylase from Syntrophotalea carbinolica (strain DSM 2380 / NBRC 103641 / GraBd1) (Pelobacter carbinolicus).